A 385-amino-acid polypeptide reads, in one-letter code: 1-deoxy-D-xylulose 5-phosphate reductoisomerase (385 aa).

Residues Thr10, Gly11, Ser12, Ile13, Lys37, and Asn124 each coordinate NADPH. Lys125 contributes to the 1-deoxy-D-xylulose 5-phosphate binding site. Glu126 is an NADPH binding site. Asp150 serves as a coordination point for Mn(2+). The 1-deoxy-D-xylulose 5-phosphate site is built by Ser151, Glu152, Ser176, and His199. Glu152 contributes to the Mn(2+) binding site. Gly205 contributes to the NADPH binding site. 1-deoxy-D-xylulose 5-phosphate contacts are provided by Ser212, Asn217, Lys218, and Glu221. Glu221 is a Mn(2+) binding site.

Belongs to the DXR family. The cofactor is Mg(2+). Requires Mn(2+) as cofactor.

The catalysed reaction is 2-C-methyl-D-erythritol 4-phosphate + NADP(+) = 1-deoxy-D-xylulose 5-phosphate + NADPH + H(+). The protein operates within isoprenoid biosynthesis; isopentenyl diphosphate biosynthesis via DXP pathway; isopentenyl diphosphate from 1-deoxy-D-xylulose 5-phosphate: step 1/6. Catalyzes the NADPH-dependent rearrangement and reduction of 1-deoxy-D-xylulose-5-phosphate (DXP) to 2-C-methyl-D-erythritol 4-phosphate (MEP). The protein is 1-deoxy-D-xylulose 5-phosphate reductoisomerase of Clostridium botulinum (strain Okra / Type B1).